The following is a 209-amino-acid chain: Thymidylate kinase (209 aa).

10–17 (GLDGAGKS) serves as a coordination point for ATP.

This sequence belongs to the thymidylate kinase family.

It catalyses the reaction dTMP + ATP = dTDP + ADP. In terms of biological role, phosphorylation of dTMP to form dTDP in both de novo and salvage pathways of dTTP synthesis. This Francisella tularensis subsp. novicida (strain U112) protein is Thymidylate kinase.